A 104-amino-acid chain; its full sequence is NPPAIFKSYCEIIVTYFPFDEQNCSMKLGTWTYDGTVVAIYPEGPRPDLSNYMQSGEWTLKDYRGFWHSVNYSCCLDTPYLDITYHFILLRLPLYFIVNVIIPC.

Residues 1-104 (NPPAIFKSYC…YFIVNVIIPC (104 aa)) are Extracellular-facing. 2 disulfides stabilise this stretch: C10–C24 and C74–C75. N23 is a glycosylation site (N-linked (GlcNAc...) asparagine).

This sequence belongs to the ligand-gated ion channel (TC 1.A.9) family. Acetylcholine receptor (TC 1.A.9.1) subfamily. Alpha-1/CHRNA1 sub-subfamily. In terms of assembly, one of the alpha chains that assemble within the acetylcholine receptor, a pentamer of two alpha chains, a beta, a delta, and a gamma or epsilon chains.

The protein resides in the postsynaptic cell membrane. It is found in the cell membrane. It catalyses the reaction K(+)(in) = K(+)(out). The enzyme catalyses Na(+)(in) = Na(+)(out). Upon acetylcholine binding, the AChR responds by an extensive change in conformation that affects all subunits and leads to opening of an ion-conducting channel across the plasma membrane. The polypeptide is Acetylcholine receptor subunit alpha (CHRNA1) (Naja naja (Indian cobra)).